Consider the following 206-residue polypeptide: Small ribosomal subunit protein uS4A (206 aa).

The region spanning 98–164 is the S4 RNA-binding domain; it reads LRLDNVAYKL…EKFKTFAENP (67 aa).

This sequence belongs to the universal ribosomal protein uS4 family. As to quaternary structure, part of the 30S ribosomal subunit. Contacts protein S5. The interaction surface between S4 and S5 is involved in control of translational fidelity.

Functionally, one of the primary rRNA binding proteins, it binds directly to 16S rRNA where it nucleates assembly of the body of the 30S subunit. Its function is as follows. With S5 and S12 plays an important role in translational accuracy. This is Small ribosomal subunit protein uS4A (rspD1) from Clostridium acetobutylicum (strain ATCC 824 / DSM 792 / JCM 1419 / IAM 19013 / LMG 5710 / NBRC 13948 / NRRL B-527 / VKM B-1787 / 2291 / W).